A 458-amino-acid polypeptide reads, in one-letter code: GTPase Der (458 aa).

EngA-type G domains follow at residues 4–169 and 178–353; these read PSIA…PKDL and IMMS…TQHR. GTP-binding positions include 10–17, 57–61, 120–123, 184–191, 231–235, and 296–299; these read GRPNVGKS, DTGGL, NKCE, DTAGI, and NKWD. In terms of domain architecture, KH-like spans 354 to 439; sequence RRVTTSVVNE…PIILLWRGKQ (86 aa).

The protein belongs to the TRAFAC class TrmE-Era-EngA-EngB-Septin-like GTPase superfamily. EngA (Der) GTPase family. In terms of assembly, associates with the 50S ribosomal subunit.

GTPase that plays an essential role in the late steps of ribosome biogenesis. The chain is GTPase Der from Prochlorococcus marinus subsp. pastoris (strain CCMP1986 / NIES-2087 / MED4).